A 220-amino-acid chain; its full sequence is Pyridoxine/pyridoxamine 5'-phosphate oxidase (220 aa).

Substrate is bound by residues 13-16 and Lys77; that span reads RVEY. FMN contacts are provided by residues 72-77, 87-88, Lys94, and Gln116; these read RTVLCK and FT. Substrate is bound by residues Tyr134, Arg138, and Ser142. FMN-binding positions include 151–152 and Trp197; that span reads QS. Residue 203–205 coordinates substrate; it reads RLH. Arg207 lines the FMN pocket.

This sequence belongs to the pyridoxamine 5'-phosphate oxidase family. In terms of assembly, homodimer. Requires FMN as cofactor.

The catalysed reaction is pyridoxamine 5'-phosphate + O2 + H2O = pyridoxal 5'-phosphate + H2O2 + NH4(+). The enzyme catalyses pyridoxine 5'-phosphate + O2 = pyridoxal 5'-phosphate + H2O2. It functions in the pathway cofactor metabolism; pyridoxal 5'-phosphate salvage; pyridoxal 5'-phosphate from pyridoxamine 5'-phosphate: step 1/1. The protein operates within cofactor metabolism; pyridoxal 5'-phosphate salvage; pyridoxal 5'-phosphate from pyridoxine 5'-phosphate: step 1/1. In terms of biological role, catalyzes the oxidation of either pyridoxine 5'-phosphate (PNP) or pyridoxamine 5'-phosphate (PMP) into pyridoxal 5'-phosphate (PLP). This is Pyridoxine/pyridoxamine 5'-phosphate oxidase from Mycolicibacterium paratuberculosis (strain ATCC BAA-968 / K-10) (Mycobacterium paratuberculosis).